A 749-amino-acid chain; its full sequence is Homeobox-leucine zipper protein ROC7 (749 aa).

A disordered region spans residues Leu-26–His-98. Basic and acidic residues predominate over residues Ser-46 to Met-57. Over residues Ser-68 to Gly-78 the composition is skewed to gly residues. Residues Arg-86–Gln-97 are compositionally biased toward basic residues. The homeobox DNA-binding region spans Arg-88–His-147. Residues Gln-137–Tyr-218 are a coiled coil. The region spanning Ala-256–Ser-494 is the START domain.

This sequence belongs to the HD-ZIP homeobox family. Class IV subfamily.

Its subcellular location is the nucleus. Probable transcription factor. This Oryza sativa subsp. indica (Rice) protein is Homeobox-leucine zipper protein ROC7 (ROC7).